Here is a 127-residue protein sequence, read N- to C-terminus: uncharacterized protein (127 aa).

Positions 1–16 (MIKKIIFGIAILLSTS) are cleaved as a signal peptide. Cysteine 17 carries N-palmitoyl cysteine lipidation. Cysteine 17 is lipidated: S-diacylglycerol cysteine. A coiled-coil region spans residues 56-101 (EVREEIQKYRVAIVKINKKKRELYNRLSKEAQNFLAEQQKYKQKLS). Over residues 107–118 (VENDQKNNTADS) the composition is skewed to polar residues. The segment at 107 to 127 (VENDQKNNTADSNDNKSKDTK) is disordered.

Its subcellular location is the cell membrane. This is an uncharacterized protein from Rickettsia conorii (strain ATCC VR-613 / Malish 7).